We begin with the raw amino-acid sequence, 650 residues long: Fructose-1,6-bisphosphatase class 3 (650 aa).

It belongs to the FBPase class 3 family. Mn(2+) serves as cofactor.

It carries out the reaction beta-D-fructose 1,6-bisphosphate + H2O = beta-D-fructose 6-phosphate + phosphate. It participates in carbohydrate biosynthesis; gluconeogenesis. This Finegoldia magna (strain ATCC 29328 / DSM 20472 / WAL 2508) (Peptostreptococcus magnus) protein is Fructose-1,6-bisphosphatase class 3.